A 454-amino-acid chain; its full sequence is Putative tyrosine kinase 36 (454 aa).

ATP is bound by residues L80–V88 and K98. D192 acts as the Proton acceptor in catalysis.

This sequence belongs to the protein kinase superfamily. Tyr protein kinase family.

It catalyses the reaction L-tyrosyl-[protein] + ATP = O-phospho-L-tyrosyl-[protein] + ADP + H(+). The chain is Putative tyrosine kinase 36 (36) from Alcelaphine herpesvirus 1 (strain C500) (AlHV-1).